The chain runs to 115 residues: Histidine-rich carboxyl terminus protein 1 (115 aa).

A helical membrane pass occupies residues 9–29; sequence ALVGWITGAAVAVLLLLLLLA. Positions 86–115 are disordered; the sequence is GLHHHHHPRHTPHHLHHHHHPHRHHPRHAR. A compositionally biased stretch (basic residues) spans 87–115; it reads LHHHHHPRHTPHHLHHHHHPHRHHPRHAR.

The protein resides in the membrane. This Homo sapiens (Human) protein is Histidine-rich carboxyl terminus protein 1 (HRCT1).